We begin with the raw amino-acid sequence, 164 residues long: UPF0305 protein MTH_812 (164 aa).

The protein belongs to the UPF0305 family.

This Methanothermobacter thermautotrophicus (strain ATCC 29096 / DSM 1053 / JCM 10044 / NBRC 100330 / Delta H) (Methanobacterium thermoautotrophicum) protein is UPF0305 protein MTH_812.